Here is a 118-residue protein sequence, read N- to C-terminus: Large ribosomal subunit protein uL18 (118 aa).

Belongs to the universal ribosomal protein uL18 family. As to quaternary structure, part of the 50S ribosomal subunit; part of the 5S rRNA/L5/L18/L25 subcomplex. Contacts the 5S and 23S rRNAs.

Functionally, this is one of the proteins that bind and probably mediate the attachment of the 5S RNA into the large ribosomal subunit, where it forms part of the central protuberance. The protein is Large ribosomal subunit protein uL18 of Helicobacter hepaticus (strain ATCC 51449 / 3B1).